The primary structure comprises 132 residues: L-ectoine synthase (132 aa).

It belongs to the ectoine synthase family.

It catalyses the reaction (2S)-4-acetamido-2-aminobutanoate = L-ectoine + H2O. The protein operates within amine and polyamine biosynthesis; ectoine biosynthesis; L-ectoine from L-aspartate 4-semialdehyde: step 3/3. Its function is as follows. Catalyzes the circularization of gamma-N-acetyl-alpha,gamma-diaminobutyric acid (ADABA) to ectoine (1,4,5,6-tetrahydro-2-methyl-4-pyrimidine carboxylic acid), which is an excellent osmoprotectant. The protein is L-ectoine synthase of Teredinibacter turnerae (strain ATCC 39867 / T7901).